A 750-amino-acid chain; its full sequence is Photosystem I P700 chlorophyll a apoprotein A1 (750 aa).

Helical transmembrane passes span 70 to 93 (VFSA…FHGA), 156 to 179 (LYTT…FHYH), 195 to 219 (LNHH…HVSL), 291 to 309 (TAHH…GHMY), 346 to 369 (WHAQ…HHMY), 385 to 411 (LSLF…IFMV), 433 to 455 (AIIS…LYIH), and 531 to 549 (FLVH…LILL). [4Fe-4S] cluster-binding residues include C573 and C582. 2 helical membrane passes run 589–610 (HVFL…HFSW) and 664–686 (LSAY…MFLF). H675 is a binding site for chlorophyll a'. Chlorophyll a is bound by residues M683 and Y691. W692 is a phylloquinone binding site. Residues 724-744 (AVGVAHYLLGGIATTWAFFLA) form a helical membrane-spanning segment.

It belongs to the PsaA/PsaB family. In terms of assembly, the PsaA/B heterodimer binds the P700 chlorophyll special pair and subsequent electron acceptors. PSI consists of a core antenna complex that captures photons, and an electron transfer chain that converts photonic excitation into a charge separation. The eukaryotic PSI reaction center is composed of at least 11 subunits. P700 is a chlorophyll a/chlorophyll a' dimer, A0 is one or more chlorophyll a, A1 is one or both phylloquinones and FX is a shared 4Fe-4S iron-sulfur center. is required as a cofactor.

The protein localises to the plastid. It localises to the chloroplast thylakoid membrane. It carries out the reaction reduced [plastocyanin] + hnu + oxidized [2Fe-2S]-[ferredoxin] = oxidized [plastocyanin] + reduced [2Fe-2S]-[ferredoxin]. Its function is as follows. PsaA and PsaB bind P700, the primary electron donor of photosystem I (PSI), as well as the electron acceptors A0, A1 and FX. PSI is a plastocyanin-ferredoxin oxidoreductase, converting photonic excitation into a charge separation, which transfers an electron from the donor P700 chlorophyll pair to the spectroscopically characterized acceptors A0, A1, FX, FA and FB in turn. Oxidized P700 is reduced on the lumenal side of the thylakoid membrane by plastocyanin. This chain is Photosystem I P700 chlorophyll a apoprotein A1, found in Physcomitrium patens (Spreading-leaved earth moss).